Consider the following 210-residue polypeptide: Ribosomal RNA small subunit methyltransferase G (210 aa).

S-adenosyl-L-methionine contacts are provided by residues Gly74, Phe79, 127–128 (IE), and Arg143.

Belongs to the methyltransferase superfamily. RNA methyltransferase RsmG family.

It is found in the cytoplasm. It catalyses the reaction guanosine(527) in 16S rRNA + S-adenosyl-L-methionine = N(7)-methylguanosine(527) in 16S rRNA + S-adenosyl-L-homocysteine. Specifically methylates the N7 position of guanine in position 527 of 16S rRNA. This Chelativorans sp. (strain BNC1) protein is Ribosomal RNA small subunit methyltransferase G.